The following is a 312-amino-acid chain: Olfactory receptor 2L13 (312 aa).

The Extracellular portion of the chain corresponds to 1 to 24; that stretch reads MEKWNHTSNDFILLGLLPPNQTGI. N-linked (GlcNAc...) asparagine glycans are attached at residues Asn-5 and Asn-20. The chain crosses the membrane as a helical span at residues 25–48; that stretch reads FLLCLIILIFFLASVGNSAMIHLI. Over 49–56 the chain is Cytoplasmic; sequence HVDPRLHT. A helical transmembrane segment spans residues 57–78; the sequence is PMYFLLSQLSLMDLMYISTTVP. Over 79–99 the chain is Extracellular; it reads KMAYNFLSGQKGISFLGCGVQ. Cys-96 and Cys-188 are joined by a disulfide. A helical transmembrane segment spans residues 100 to 119; the sequence is SFFFLTMACSEGLLLTSMAY. The Cytoplasmic portion of the chain corresponds to 120–138; the sequence is DRYLAICHSLYYPIRMSKM. A helical transmembrane segment spans residues 139-157; it reads MCVKMIGGSWTLGSINSLA. Residues 158–194 are Extracellular-facing; that stretch reads HTVFALHIPYCRSRAIDHFFCDVPAMLLLACTDTWVY. A helical transmembrane segment spans residues 195–218; it reads EYMVFVSTSLFLLFPFIGITSSCG. Residues 219 to 235 lie on the Cytoplasmic side of the membrane; it reads RVLFAVYHMHSKEGRKK. The helical transmembrane segment at 236 to 258 threads the bilayer; it reads AFTTISTHLTVVIFYYAPFVYTY. The Extracellular segment spans residues 259–271; the sequence is LRPRNLRSPAEDK. The helical transmembrane segment at 272 to 291 threads the bilayer; that stretch reads ILAVFYTILTPMLNPIIYSL. The Cytoplasmic segment spans residues 292 to 312; sequence RNKEVLGAMRRVFGIFSFLKE.

This sequence belongs to the G-protein coupled receptor 1 family.

Its subcellular location is the cell membrane. Its function is as follows. Odorant receptor. The protein is Olfactory receptor 2L13 (OR2L13) of Homo sapiens (Human).